A 3390-amino-acid chain; its full sequence is Genome polyprotein (3390 aa).

An interaction with host EXOC1 region spans residues M1–M15. Over M1–K100 the chain is Cytoplasmic. Residues L37–F72 are hydrophobic; homodimerization of capsid protein C. Positions T101–A114 are cleaved as a propeptide — ER anchor for the capsid protein C, removed in mature form by serine protease NS3. A helical transmembrane segment spans residues T101 to T118. The Extracellular segment spans residues S119 to R243. N183 carries N-linked (GlcNAc...) asparagine; by host glycosylation. The helical transmembrane segment at H244–Q264 threads the bilayer. Residue K265 is a topological domain, cytoplasmic. The chain crosses the membrane as a helical span at residues V266 to T280. Residues M281–T723 lie on the Extracellular side of the membrane. Disulfide bonds link C283-C310, C340-C401, C354-C385, and C372-C396. A glycan (N-linked (GlcNAc...) asparagine; by host) is linked at N347. The segment at D378–G391 is fusion peptide. N433 carries an N-linked (GlcNAc...) asparagine; by host glycan. Disulfide bonds link C463-C563 and C580-C611. A helical membrane pass occupies residues A724–I744. Topologically, residues G745–N750 are cytoplasmic. The helical transmembrane segment at T751–V771 threads the bilayer. Residues Q772–M1193 lie on the Extracellular side of the membrane. 6 disulfides stabilise this stretch: C777–C788, C828–C916, C952–C996, C1053–C1102, C1064–C1086, and C1085–C1089. 2 N-linked (GlcNAc...) asparagine; by host glycosylation sites follow: N903 and N980. N-linked (GlcNAc...) asparagine; by host glycans are attached at residues N1132 and N1188. A helical membrane pass occupies residues G1194–L1218. The Cytoplasmic segment spans residues R1219–R1224. A helical membrane pass occupies residues E1225–E1243. The Lumenal segment spans residues D1244–T1267. Residues Y1268–V1288 traverse the membrane as a helical segment. A topological domain (cytoplasmic) is located at residue A1289. The helical transmembrane segment at W1290–S1308 threads the bilayer. The Lumenal portion of the chain corresponds to S1309 to D1315. Residues W1316–L1336 form a helical membrane-spanning segment. Residues K1337–S1344 are Cytoplasmic-facing. The helical transmembrane segment at W1345–L1365 threads the bilayer. Over R1366–D1368 the chain is Lumenal. A helical membrane pass occupies residues V1369–G1389. At T1390–K1443 the chain is on the cytoplasmic side. The tract at residues V1396 to E1435 is interacts with and activates NS3 protease. Residues T1444 to W1464 constitute an intramembrane region (helical). Topologically, residues H1465–T2146 are cytoplasmic. The region spanning S1474 to E1651 is the Peptidase S7 domain. Active-site charge relay system; for serine protease NS3 activity residues include H1524, D1548, and S1608. A Helicase ATP-binding domain is found at E1654 to E1810. The tract at residues K1658–N1661 is important for RNA-binding. Residue L1667–T1674 participates in ATP binding. The DEAH box motif lies at D1758–H1761. Residues G1821–E1986 enclose the Helicase C-terminal domain. K1862 carries the post-translational modification N6-acetyllysine; by host. Residues L2147–G2167 form a helical membrane-spanning segment. Over K2168 to G2169 the chain is Lumenal. The segment at residues I2170 to A2190 is an intramembrane region (helical). A topological domain (lumenal) is located at residue D2191. Residues V2192–I2212 form a helical membrane-spanning segment. Over P2213–A2227 the chain is Cytoplasmic. Residues Y2228–L2248 traverse the membrane as a helical segment. The Lumenal segment spans residues E2249–D2273. The segment at residues L2274–L2294 is an intramembrane region (helical). Topologically, residues R2295–V2305 are lumenal. N2300 and N2304 each carry an N-linked (GlcNAc...) asparagine; by host glycan. Positions S2306–I2326 form an intramembrane region, helical. Residues S2327 to P2346 are Lumenal-facing. A helical transmembrane segment spans residues L2347–L2367. The Cytoplasmic segment spans residues Q2368–Q2412. The chain crosses the membrane as a helical span at residues V2413 to C2433. Residues E2434–T2458 are Lumenal-facing. An N-linked (GlcNAc...) asparagine; by host glycan is attached at N2456. Residues I2459–L2479 traverse the membrane as a helical segment. Over S2480–W3390 the chain is Cytoplasmic. Residues T2492–H2753 enclose the mRNA cap 0-1 NS5-type MT domain. An S-adenosyl-L-methionine-binding site is contributed by S2546. S2546 carries the post-translational modification Phosphoserine. The active-site For 2'-O-MTase activity is K2551. An SUMO-interacting motif motif is present at residues V2567–L2570. Positions 2576, 2577, 2594, 2595, 2621, and 2622 each coordinate S-adenosyl-L-methionine. The active-site For 2'-O-MTase activity is D2636. I2637 contacts S-adenosyl-L-methionine. Active-site for 2'-O-MTase activity residues include K2670 and E2706. Y2708 contributes to the S-adenosyl-L-methionine binding site. Zn(2+) contacts are provided by E2927, H2931, C2936, and C2939. Residues A3018–L3168 enclose the RdRp catalytic domain. H3202, C3218, and C3337 together coordinate Zn(2+).

In the N-terminal section; belongs to the class I-like SAM-binding methyltransferase superfamily. mRNA cap 0-1 NS5-type methyltransferase family. In terms of assembly, homodimer. Interacts (via N-terminus) with host EXOC1 (via C-terminus); this interaction results in EXOC1 degradation through the proteasome degradation pathway. As to quaternary structure, forms heterodimers with envelope protein E in the endoplasmic reticulum and Golgi. Homodimer; in the endoplasmic reticulum and Golgi. Interacts with protein prM. Interacts with non-structural protein 1. In terms of assembly, homodimer; Homohexamer when secreted. Interacts with envelope protein E. As to quaternary structure, interacts (via N-terminus) with serine protease NS3. Forms a heterodimer with serine protease NS3. May form homooligomers. In terms of assembly, forms a heterodimer with NS2B. Interacts with NS4B. Interacts with unphosphorylated RNA-directed RNA polymerase NS5; this interaction stimulates RNA-directed RNA polymerase NS5 guanylyltransferase activity. Interacts with host SHFL. As to quaternary structure, interacts with host MAVS; this interaction inhibits the synthesis of IFN-beta. Interacts with host SHFL. Interacts with host AUP1; the interaction occurs in the presence of Dengue virus NS4B and induces lipophagy which facilitates production of virus progeny particles. Interacts with serine protease NS3. In terms of assembly, homodimer. Interacts with host STAT2; this interaction inhibits the phosphorylation of the latter, and, when all viral proteins are present (polyprotein), targets STAT2 for degradation. Interacts with serine protease NS3. In terms of processing, specific enzymatic cleavages in vivo yield mature proteins. Cleavages in the lumen of endoplasmic reticulum are performed by host signal peptidase, whereas cleavages in the cytoplasmic side are performed by serine protease NS3. Signal cleavage at the 2K-4B site requires a prior NS3 protease-mediated cleavage at the 4A-2K site. Cleaved in post-Golgi vesicles by a host furin, releasing the mature small envelope protein M, and peptide pr. This cleavage is incomplete as up to 30% of viral particles still carry uncleaved prM. Post-translationally, N-glycosylated. In terms of processing, N-glycosylated. The excreted form is glycosylated and this is required for efficient secretion of the protein from infected cells. Acetylated by host KAT5. Acetylation modulates NS3 RNA-binding and unwinding activities and plays an important positive role for viral replication. Post-translationally, sumoylation of RNA-directed RNA polymerase NS5 increases NS5 protein stability allowing proper viral RNA replication. In terms of processing, phosphorylated on serines residues. This phosphorylation may trigger NS5 nuclear localization.

It is found in the virion. It localises to the host nucleus. Its subcellular location is the host cytoplasm. The protein resides in the host perinuclear region. The protein localises to the secreted. It is found in the virion membrane. It localises to the host endoplasmic reticulum membrane. Its subcellular location is the host mitochondrion. It catalyses the reaction Selective hydrolysis of -Xaa-Xaa-|-Yaa- bonds in which each of the Xaa can be either Arg or Lys and Yaa can be either Ser or Ala.. The catalysed reaction is RNA(n) + a ribonucleoside 5'-triphosphate = RNA(n+1) + diphosphate. It carries out the reaction a ribonucleoside 5'-triphosphate + H2O = a ribonucleoside 5'-diphosphate + phosphate + H(+). The enzyme catalyses ATP + H2O = ADP + phosphate + H(+). It catalyses the reaction a 5'-end (5'-triphosphoguanosine)-ribonucleoside in mRNA + S-adenosyl-L-methionine = a 5'-end (N(7)-methyl 5'-triphosphoguanosine)-ribonucleoside in mRNA + S-adenosyl-L-homocysteine. The catalysed reaction is a 5'-end (N(7)-methyl 5'-triphosphoguanosine)-ribonucleoside in mRNA + S-adenosyl-L-methionine = a 5'-end (N(7)-methyl 5'-triphosphoguanosine)-(2'-O-methyl-ribonucleoside) in mRNA + S-adenosyl-L-homocysteine + H(+). Functionally, plays a role in virus budding by binding to the cell membrane and gathering the viral RNA into a nucleocapsid that forms the core of a mature virus particle. During virus entry, may induce genome penetration into the host cytoplasm after hemifusion induced by the surface proteins. Can migrate to the cell nucleus where it modulates host functions. Overcomes the anti-viral effects of host EXOC1 by sequestering and degrading the latter through the proteasome degradation pathway. Inhibits RNA silencing by interfering with host Dicer. Its function is as follows. Prevents premature fusion activity of envelope proteins in trans-Golgi by binding to envelope protein E at pH6.0. After virion release in extracellular space, gets dissociated from E dimers. In terms of biological role, acts as a chaperone for envelope protein E during intracellular virion assembly by masking and inactivating envelope protein E fusion peptide. prM is the only viral peptide matured by host furin in the trans-Golgi network probably to avoid catastrophic activation of the viral fusion activity in acidic Golgi compartment prior to virion release. prM-E cleavage is inefficient, and many virions are only partially matured. These uncleaved prM would play a role in immune evasion. Functionally, may play a role in virus budding. Exerts cytotoxic effects by activating a mitochondrial apoptotic pathway through M ectodomain. May display a viroporin activity. Binds to host cell surface receptor and mediates fusion between viral and cellular membranes. Envelope protein is synthesized in the endoplasmic reticulum in the form of heterodimer with protein prM. They play a role in virion budding in the ER, and the newly formed immature particle is covered with 60 spikes composed of heterodimer between precursor prM and envelope protein E. The virion is transported to the Golgi apparatus where the low pH causes dissociation of PrM-E heterodimers and formation of E homodimers. prM-E cleavage is inefficient, and many virions are only partially matured. These uncleaved prM would play a role in immune evasion. Its function is as follows. Involved in immune evasion, pathogenesis and viral replication. Once cleaved off the polyprotein, is targeted to three destinations: the viral replication cycle, the plasma membrane and the extracellular compartment. Essential for viral replication. Required for formation of the replication complex and recruitment of other non-structural proteins to the ER-derived membrane structures. Excreted as a hexameric lipoparticle that plays a role against host immune response. Antagonizing the complement function. Binds to the host macrophages and dendritic cells. Inhibits signal transduction originating from Toll-like receptor 3 (TLR3). In terms of biological role, disrupts the host endothelial glycocalyx layer of host pulmonary microvascular endothelial cells, inducing degradation of sialic acid and shedding of heparan sulfate proteoglycans. NS1 induces expression of sialidases, heparanase, and activates cathepsin L, which activates heparanase via enzymatic cleavage. These effects are probably linked to the endothelial hyperpermeability observed in severe dengue disease. Functionally, component of the viral RNA replication complex that functions in virion assembly and antagonizes the host immune response. Required cofactor for the serine protease function of NS3. May have membrane-destabilizing activity and form viroporins. Its function is as follows. Displays three enzymatic activities: serine protease, NTPase and RNA helicase. NS3 serine protease, in association with NS2B, performs its autocleavage and cleaves the polyprotein at dibasic sites in the cytoplasm: C-prM, NS2A-NS2B, NS2B-NS3, NS3-NS4A, NS4A-2K and NS4B-NS5. NS3 RNA helicase binds RNA and unwinds dsRNA in the 3' to 5' direction. In terms of biological role, regulates the ATPase activity of the NS3 helicase activity. NS4A allows NS3 helicase to conserve energy during unwinding. Plays a role in the inhibition of the host innate immune response. Interacts with host MAVS and thereby prevents the interaction between RIGI and MAVS. In turn, IFN-beta production is impaired. Interacts with host AUP1 which mediates induction of lipophagy in host cells and facilitates production of virus progeny particles. Functionally, functions as a signal peptide for NS4B and is required for the interferon antagonism activity of the latter. Induces the formation of ER-derived membrane vesicles where the viral replication takes place. Inhibits interferon (IFN)-induced host STAT1 phosphorylation and nuclear translocation, thereby preventing the establishment of cellular antiviral state by blocking the IFN-alpha/beta pathway. Its function is as follows. Replicates the viral (+) and (-) RNA genome, and performs the capping of genomes in the cytoplasm. NS5 methylates viral RNA cap at guanine N-7 and ribose 2'-O positions. Besides its role in RNA genome replication, also prevents the establishment of cellular antiviral state by blocking the interferon-alpha/beta (IFN-alpha/beta) signaling pathway. Inhibits host TYK2 and STAT2 phosphorylation, thereby preventing activation of JAK-STAT signaling pathway. In Dengue virus type 3 (strain Philippines/H87/1956) (DENV-3), this protein is Genome polyprotein.